Here is a 308-residue protein sequence, read N- to C-terminus: Coenzyme PQQ synthesis protein B (308 aa).

It belongs to the PqqB family.

The protein operates within cofactor biosynthesis; pyrroloquinoline quinone biosynthesis. Its function is as follows. May be involved in the transport of PQQ or its precursor to the periplasm. This is Coenzyme PQQ synthesis protein B from Klebsiella pneumoniae (strain 342).